A 136-amino-acid polypeptide reads, in one-letter code: Mediator of RNA polymerase II transcription subunit 22 (136 aa).

It belongs to the Mediator complex subunit 22 family. Component of the Mediator complex.

It localises to the nucleus. Functionally, component of the Mediator complex, a coactivator involved in the regulated transcription of nearly all RNA polymerase II-dependent genes. Mediator functions as a bridge to convey information from gene-specific regulatory proteins to the basal RNA polymerase II transcription machinery. Mediator is recruited to promoters by direct interactions with regulatory proteins and serves as a scaffold for the assembly of a functional preinitiation complex with RNA polymerase II and the general transcription factors. The polypeptide is Mediator of RNA polymerase II transcription subunit 22 (med22) (Schizosaccharomyces pombe (strain 972 / ATCC 24843) (Fission yeast)).